We begin with the raw amino-acid sequence, 482 residues long: MAHLLSTSCSMKVSPSEKLSSKCWNIGSTKYPMSFTQQTSKSAFKSLVHQRNNTQKLTVVRATTVPLNQETKAESGTSSFENNGNTSGRKRVMVIGGDGYCGWATALHLSKKNYDVCIVDNLVRRLFDHQLGLDSLTPIASIQNRIRRWQGLTGKTIDLHVGDICDFEFLAETFKSFEPDTVVHFGEQRSAPYSMIDRSRAVYTQQNNVIGTINVLFAIKEFSEECHLVKLGTMGEYGTPNIDIEEGFITITHNGRTDTLPYPKQASSFYHLSKVHDSHNIAFTCKAWGIRATDLNQGVVYGVMTEETAMHEELCNRFDYDAVFGTALNRFCVQAAVGHPLTVYGKGGQTRGYLDIRDTVQCVELAIANPAKLGEFRVFNQFTEQYSVRDLAALVTKAGEKLGLNVETISVPNPRVEAEEHYYNAKHTKLAELGLKPHLLSDSLLDSVLNFAVQYKDRVDTKQIMPSVSWKKIGVKPQTLRA.

A chloroplast-targeting transit peptide spans 1–61 (MAHLLSTSCS…NNTQKLTVVR (61 aa)). NAD(+)-binding positions include 100–101 (YC), 120–124 (DNLVR), 163–164 (DI), R189, and N207. Residue R189 participates in substrate binding. Residues T233 and Y270 each coordinate substrate. T233 is a catalytic residue. The NAD(+) site is built by Y270 and K274. Y270 functions as the Proton acceptor in the catalytic mechanism. The active site involves K274. Residue Q297 coordinates substrate. Residue V300 participates in NAD(+) binding. Residues 327 to 330 (ALNR), 342 to 344 (TVY), and 415 to 417 (RVE) contribute to the substrate site.

The protein belongs to the NAD(P)-dependent epimerase/dehydratase family. As to quaternary structure, homodimer. Interacts with FdGOGAT (via FMN-binding domain). NAD(+) serves as cofactor. In terms of processing, the N-terminus is blocked.

Its subcellular location is the plastid. It is found in the chloroplast stroma. The enzyme catalyses sulfite + UDP-alpha-D-glucose + H(+) = UDP-alpha-D-6-sulfoquinovose + H2O. Its function is as follows. Involved in the biosynthesis of sulfolipids found in thylakoid membranes. Converts UDP-glucose and sulfite to the sulfolipid head group precursor UDP-sulfoquinovose. The sulfite is delivered to the reaction center by the FMN-binding domain of FdGOGAT. This chain is UDP-sulfoquinovose synthase, chloroplastic (SQD1), found in Spinacia oleracea (Spinach).